The sequence spans 328 residues: GTP 3',8-cyclase (328 aa).

The Radical SAM core domain maps to 1–229; that stretch reads MNQVDYLRIS…DAQVRGAGPA (229 aa). Arg8 serves as a coordination point for GTP. Residues Cys15 and Cys19 each contribute to the [4Fe-4S] cluster site. Tyr21 lines the S-adenosyl-L-methionine pocket. Cys22 is a [4Fe-4S] cluster binding site. Arg60 provides a ligand contact to GTP. Gly64 contributes to the S-adenosyl-L-methionine binding site. Thr91 is a binding site for GTP. Ser115 is a binding site for S-adenosyl-L-methionine. Lys155 contributes to the GTP binding site. Residue Met189 participates in S-adenosyl-L-methionine binding. [4Fe-4S] cluster-binding residues include Cys252 and Cys255. Residue 257 to 259 participates in GTP binding; the sequence is RMR. Residue Cys269 coordinates [4Fe-4S] cluster.

The protein belongs to the radical SAM superfamily. MoaA family. As to quaternary structure, monomer and homodimer. Requires [4Fe-4S] cluster as cofactor.

It catalyses the reaction GTP + AH2 + S-adenosyl-L-methionine = (8S)-3',8-cyclo-7,8-dihydroguanosine 5'-triphosphate + 5'-deoxyadenosine + L-methionine + A + H(+). The protein operates within cofactor biosynthesis; molybdopterin biosynthesis. Functionally, catalyzes the cyclization of GTP to (8S)-3',8-cyclo-7,8-dihydroguanosine 5'-triphosphate. The polypeptide is GTP 3',8-cyclase (Nostoc sp. (strain PCC 7120 / SAG 25.82 / UTEX 2576)).